The chain runs to 144 residues: Large ribosomal subunit protein uL13 (144 aa).

Belongs to the universal ribosomal protein uL13 family. As to quaternary structure, part of the 50S ribosomal subunit.

In terms of biological role, this protein is one of the early assembly proteins of the 50S ribosomal subunit, although it is not seen to bind rRNA by itself. It is important during the early stages of 50S assembly. The protein is Large ribosomal subunit protein uL13 of Clostridium perfringens (strain 13 / Type A).